We begin with the raw amino-acid sequence, 654 residues long: Protein fem-1 homolog A (654 aa).

ANK repeat units lie at residues 2–31 (DLHT…REEI), 40–70 (GGGT…SVEA), 82–111 (EGAP…SVNR), 115–145 (TNST…DLEV), 149–178 (HGHT…QVNR), 182–211 (KGNT…RMER), and 214–243 (YGMT…GHGQ). Serine 108 is subject to Phosphoserine. Residues 241–265 (HGQLSGTELPGEGSSQMAGNHCSTP) are disordered. A compositionally biased stretch (polar residues) spans 253-263 (GSSQMAGNHCS). 2 TPR repeats span residues 283–317 (VEAL…RHQG) and 375–408 (SYYI…QQNN). ANK repeat units follow at residues 519 to 561 (NGFT…DPDS) and 565 to 594 (DNNT…HMDA). Serine 608 carries the phosphoserine modification.

The protein belongs to the fem-1 family. In terms of assembly, component of a CRL2 E3 ubiquitin-protein ligase complex, also named ECS (Elongin BC-CUL2/5-SOCS-box protein) complex, composed of CUL2, Elongin BC (ELOB and ELOC), RBX1 and substrate-specific adapter FEM1A. Interacts with PTGER4. Interacts with NFKB1; the interaction is direct. In terms of processing, phosphorylated; highly phosphorylated in myoblasts and myotubes. Phosphorylation at Ser-108 and Ser-608 promote PGE2-EP4-mediated inhibition of inflammation. Dephosphorylated by protein phosphatase 2A (PP2A).

The protein resides in the mitochondrion. It is found in the cytoplasm. It participates in protein modification; protein ubiquitination. In terms of biological role, substrate-recognition component of a Cul2-RING (CRL2) E3 ubiquitin-protein ligase complex of the DesCEND (destruction via C-end degrons) pathway, which recognizes a C-degron located at the extreme C terminus of target proteins, leading to their ubiquitination and degradation. The C-degron recognized by the DesCEND pathway is usually a motif of less than ten residues and can be present in full-length proteins, truncated proteins or proteolytically cleaved forms. The CRL2(FEM1A) complex specifically recognizes proteins with an arginine at the C-terminus: recognizes and binds proteins ending with -Lys/Arg-Xaa-Arg and -Lys/Arg-Xaa-Xaa-Arg C-degrons, such as SIL1 or OR51B2, leading to their ubiquitination and degradation. Involved in PGE2-EP4-mediated inhibition of inflammation of macrophages via interaction with NFKB1 and PTGER4. Promotes inflammation in brain microglia through MAP2K4/MKK4-mediated signaling. This chain is Protein fem-1 homolog A, found in Rattus norvegicus (Rat).